The chain runs to 295 residues: Acetylglutamate kinase (295 aa).

Substrate contacts are provided by residues 66 to 67, arginine 88, and asparagine 193; that span reads GG.

The protein belongs to the acetylglutamate kinase family. ArgB subfamily.

It is found in the cytoplasm. The enzyme catalyses N-acetyl-L-glutamate + ATP = N-acetyl-L-glutamyl 5-phosphate + ADP. It participates in amino-acid biosynthesis; L-arginine biosynthesis; N(2)-acetyl-L-ornithine from L-glutamate: step 2/4. Functionally, catalyzes the ATP-dependent phosphorylation of N-acetyl-L-glutamate. This is Acetylglutamate kinase from Bradyrhizobium diazoefficiens (strain JCM 10833 / BCRC 13528 / IAM 13628 / NBRC 14792 / USDA 110).